A 366-amino-acid chain; its full sequence is Leucine dehydrogenase (366 aa).

Residue K82 is part of the active site. 182–188 (GVGNVAY) contacts NAD(+).

Belongs to the Glu/Leu/Phe/Val dehydrogenases family.

It carries out the reaction L-leucine + NAD(+) + H2O = 4-methyl-2-oxopentanoate + NH4(+) + NADH + H(+). Its pathway is amino-acid degradation; L-leucine degradation; 4-methyl-2-oxopentanoate from L-leucine (dehydrogenase route): step 1/1. Catalyzes the reversible deamination of L-leucine to 4-methyl-2-oxopentanoate. This Bacillus cereus protein is Leucine dehydrogenase (ldh).